Here is a 1219-residue protein sequence, read N- to C-terminus: Myosin-5 (1219 aa).

Positions 1–12 are enriched in basic residues; that stretch reads MAILKRGARKKV. The interval 1–20 is disordered; it reads MAILKRGARKKVHQEPAKRS. A Myosin motor domain is found at 36–715; that stretch reads VGVSDLTLLS…TLFALEHMRD (680 aa). Residue 129 to 136 participates in ATP binding; it reads GESGAGKT. Residue Ser357 is modified to Phosphoserine. Tyr359 bears the Phosphotyrosine mark. The interval 404 to 486 is actin-binding; it reads SIGILDIYGF…PGIFAAMNDS (83 aa). 2 consecutive IQ domains span residues 719 to 739 and 740 to 765; these read HNMA…RIDA and ATKI…YGTK. One can recognise a TH1 domain in the interval 771-961; it reads KERRSMSLLG…TISVRRGNPP (191 aa). Phosphoserine is present on Ser777. The span at 951–964 shows a compositional bias: polar residues; it reads STISVRRGNPPNSQ. Disordered stretches follow at residues 951–1106 and 1139–1167; these read STIS…SELP and TAYM…VLNS. Positions 974–984 are enriched in low complexity; the sequence is SISSGYHASSS. A Phosphoserine modification is found at Ser992. Positions 1030–1041 are enriched in polar residues; sequence NPASTLTASQSN. Residues 1048–1063 show a composition bias toward low complexity; the sequence is TAATRATPAATPAAAA. Residues 1072–1083 are compositionally biased toward pro residues; it reads IPPPPPPPPPSS. The SH3 domain occupies 1085 to 1147; that stretch reads PKEPMFEAAY…PTAYMKPHSG (63 aa). Ser1205 carries the post-translational modification Phosphoserine.

Belongs to the TRAFAC class myosin-kinesin ATPase superfamily. Myosin family. In terms of assembly, interacts (via myosin motor domain) with SHE4; this interaction is important for proper localization and may regulate the interaction of the motor domain with actin. Interacts (via SH3 domain) with VRP1; this interaction is required for localization to sites of polarized growth and may regulate the interaction of the tail domain with actin. Interacts (via SH3 domain) with PAN1; this interaction is important for late stages of endocytopsis. Interacts (via SH3 domain) with BBC1 and LAS17. Interacts (via C-terminal acidic tail) with ARC19 and ARC40; ARC19 and ARC40 are Arp2/3 complex subunits. Interacts with BZZ1, PKH1, PKH2, YPK1 and YPK2. In terms of processing, phosphorylation of the TEDS site (Ser-357) is required for the polarization of the actin cytoskeleton and for ligand-induced, but not for constitutive internalization of STE2. Phosphorylation probably activates the myosin-I ATPase activity. Ser-357 is phosphorylated by YPK2 in vitro.

It is found in the cytoplasm. It localises to the cytoskeleton. The protein localises to the actin patch. One of two redundant type-I myosins implicated in the organization of the actin cytoskeleton. Required for proper actin cytoskeleton polarization and for the internalization step in endocytosis. At the cell cortex, assembles in patch-like structures together with proteins from the actin-polymerizing machinery and promotes actin assembly. Functions redundantly with LAS17 as actin nucleation-promoting factor (NPF) for the Arp2/3 complex. Motor domain phosphorylation by PAK kinases CLA4 and STE20 promotes CDC42-regulated actin assembly. Functions together with the NPF PAN1 in late stages of endocytosis. Motor domain phosphorylation by PDK1 kinases PKH1 and PKH2, and by SGK kinases YPK1 and YPK2, promotes ligand-induced, but not constitutive endocytosis of the G protein-coupled receptor STE2. This chain is Myosin-5 (MYO5), found in Saccharomyces cerevisiae (strain YJM789) (Baker's yeast).